The following is a 189-amino-acid chain: Flavin prenyltransferase UbiX (189 aa).

FMN contacts are provided by residues 11–13 (GAS), Ser37, 88–91 (SMRT), and Arg123. Residue Tyr153 participates in dimethylallyl phosphate binding.

The protein belongs to the UbiX/PAD1 family.

The catalysed reaction is dimethylallyl phosphate + FMNH2 = prenylated FMNH2 + phosphate. Flavin prenyltransferase that catalyzes the synthesis of the prenylated FMN cofactor (prenyl-FMN) for 4-hydroxy-3-polyprenylbenzoic acid decarboxylase UbiD. The prenyltransferase is metal-independent and links a dimethylallyl moiety from dimethylallyl monophosphate (DMAP) to the flavin N5 and C6 atoms of FMN. The protein is Flavin prenyltransferase UbiX of Neisseria meningitidis serogroup B (strain ATCC BAA-335 / MC58).